Here is a 513-residue protein sequence, read N- to C-terminus: ATP synthase subunit alpha (513 aa).

ATP is bound at residue 169-176; it reads GDRQTGKT.

It belongs to the ATPase alpha/beta chains family. F-type ATPases have 2 components, CF(1) - the catalytic core - and CF(0) - the membrane proton channel. CF(1) has five subunits: alpha(3), beta(3), gamma(1), delta(1), epsilon(1). CF(0) has three main subunits: a(1), b(2) and c(9-12). The alpha and beta chains form an alternating ring which encloses part of the gamma chain. CF(1) is attached to CF(0) by a central stalk formed by the gamma and epsilon chains, while a peripheral stalk is formed by the delta and b chains.

It is found in the cell inner membrane. The catalysed reaction is ATP + H2O + 4 H(+)(in) = ADP + phosphate + 5 H(+)(out). In terms of biological role, produces ATP from ADP in the presence of a proton gradient across the membrane. The alpha chain is a regulatory subunit. This Ralstonia pickettii (strain 12J) protein is ATP synthase subunit alpha.